The chain runs to 127 residues: Large ribosomal subunit protein bL12 (127 aa).

The interval 98-127 (PKPIKEGAPKAEAESLKSKLEEAGAEVELK) is disordered.

Belongs to the bacterial ribosomal protein bL12 family. As to quaternary structure, homodimer. Part of the ribosomal stalk of the 50S ribosomal subunit. Forms a multimeric L10(L12)X complex, where L10 forms an elongated spine to which 2 to 4 L12 dimers bind in a sequential fashion. Binds GTP-bound translation factors.

Forms part of the ribosomal stalk which helps the ribosome interact with GTP-bound translation factors. Is thus essential for accurate translation. This Amoebophilus asiaticus (strain 5a2) protein is Large ribosomal subunit protein bL12.